Here is a 475-residue protein sequence, read N- to C-terminus: Dynein regulatory complex subunit 4 (475 aa).

The tract at residues 1–22 (MPPKRKSSPKGKTPTVVDGLST) is disordered. The regulates microtubule-binding stretch occupies residues 1-113 (MPPKRKSSPK…LLYEQQNMLS (113 aa)). 3 coiled-coil regions span residues 20-104 (LSTE…VKHL), 142-200 (RSLK…QEEE), and 242-426 (KNLD…VARV). Residues 114–257 (ELKAESIIST…TSLKEELKEM (144 aa)) form a microtubule-binding region.

Belongs to the DRC4 family. As to quaternary structure, component of the nexin-dynein regulatory complex (N-DRC). Interacts with microtubules.

Its subcellular location is the cytoplasm. It is found in the cytoskeleton. The protein localises to the cell projection. The protein resides in the cilium. It localises to the flagellum. Its subcellular location is the cilium axoneme. It is found in the cilium basal body. The protein localises to the golgi apparatus. The protein resides in the flagellum axoneme. Its function is as follows. Component of the nexin-dynein regulatory complex (N-DRC), a key regulator of ciliary/flagellar motility which maintains the alignment and integrity of the distal axoneme and regulates microtubule sliding in motile axonemes. Plays an important role in the assembly of the N-DRC linker. Plays dual roles at both the primary (or non-motile) cilia to regulate hedgehog signaling and in motile cilia to coordinate cilia movement. Required for proper slow muscle development and positively regulates ciliary smoothened (SMO)-dependent Hedgehog (Hh) signaling pathway. Required for tether cilia motility which is essential for normal otolith formation and localization in the developing inner ear. This is Dynein regulatory complex subunit 4 (gas8) from Danio rerio (Zebrafish).